Here is a 237-residue protein sequence, read N- to C-terminus: Leucyl/phenylalanyl-tRNA--protein transferase (237 aa).

It belongs to the L/F-transferase family.

It localises to the cytoplasm. The enzyme catalyses N-terminal L-lysyl-[protein] + L-leucyl-tRNA(Leu) = N-terminal L-leucyl-L-lysyl-[protein] + tRNA(Leu) + H(+). It catalyses the reaction N-terminal L-arginyl-[protein] + L-leucyl-tRNA(Leu) = N-terminal L-leucyl-L-arginyl-[protein] + tRNA(Leu) + H(+). The catalysed reaction is L-phenylalanyl-tRNA(Phe) + an N-terminal L-alpha-aminoacyl-[protein] = an N-terminal L-phenylalanyl-L-alpha-aminoacyl-[protein] + tRNA(Phe). Its function is as follows. Functions in the N-end rule pathway of protein degradation where it conjugates Leu, Phe and, less efficiently, Met from aminoacyl-tRNAs to the N-termini of proteins containing an N-terminal arginine or lysine. The sequence is that of Leucyl/phenylalanyl-tRNA--protein transferase from Shewanella baltica (strain OS223).